Here is an 896-residue protein sequence, read N- to C-terminus: Alanine--tRNA ligase (896 aa).

Zn(2+) is bound by residues His-599, His-603, Cys-707, and His-711.

This sequence belongs to the class-II aminoacyl-tRNA synthetase family. Requires Zn(2+) as cofactor.

The protein resides in the cytoplasm. It carries out the reaction tRNA(Ala) + L-alanine + ATP = L-alanyl-tRNA(Ala) + AMP + diphosphate. Its function is as follows. Catalyzes the attachment of alanine to tRNA(Ala) in a two-step reaction: alanine is first activated by ATP to form Ala-AMP and then transferred to the acceptor end of tRNA(Ala). Also edits incorrectly charged Ser-tRNA(Ala) and Gly-tRNA(Ala) via its editing domain. The chain is Alanine--tRNA ligase from Pyrobaculum calidifontis (strain DSM 21063 / JCM 11548 / VA1).